An 85-amino-acid polypeptide reads, in one-letter code: Beta-toxin BmKAs1 (85 aa).

The signal sequence occupies residues 1–19 (MKIIIFLIVCSFVLIGVKA). An LCN-type CS-alpha/beta domain is found at 20–82 (DNGYLLNKYT…LWAYETNKCN (63 aa)). 4 disulfide bridges follow: C31–C81, C35–C56, C42–C63, and C46–C65.

It belongs to the long (4 C-C) scorpion toxin superfamily. Sodium channel inhibitor family. A possible sulfoxide Met-85 on BmP09 could explain the difference of function between BmK AS-1 and BmP09. In terms of tissue distribution, expressed by the venom gland.

It is found in the secreted. Functionally, beta toxins bind voltage-independently at site-4 of sodium channels (Nav) and shift the voltage of activation toward more negative potentials thereby affecting sodium channel activation and promoting spontaneous and repetitive firing. BmKAs1 also significantly stimulates the binding of [3H]-ryanodine to ryanodine receptors on the sarcoplasmic reticulum of the skeletal muscle. It also displays antinociceptive effect in rat models. Its function is as follows. Toxin BmP09 (which may be post-translationally modified) specifically and reversibly blocks large conductance calcium-dependent and voltage-dependent potassium channels (BK) but has no effect on sodium channels. The protein is Beta-toxin BmKAs1 of Olivierus martensii (Manchurian scorpion).